The following is a 148-amino-acid chain: D-aminoacyl-tRNA deacylase (148 aa).

The short motif at 137–138 (GP) is the Gly-cisPro motif, important for rejection of L-amino acids element.

The protein belongs to the DTD family. Homodimer.

The protein localises to the cytoplasm. The catalysed reaction is glycyl-tRNA(Ala) + H2O = tRNA(Ala) + glycine + H(+). The enzyme catalyses a D-aminoacyl-tRNA + H2O = a tRNA + a D-alpha-amino acid + H(+). Functionally, an aminoacyl-tRNA editing enzyme that deacylates mischarged D-aminoacyl-tRNAs. Also deacylates mischarged glycyl-tRNA(Ala), protecting cells against glycine mischarging by AlaRS. Acts via tRNA-based rather than protein-based catalysis; rejects L-amino acids rather than detecting D-amino acids in the active site. By recycling D-aminoacyl-tRNA to D-amino acids and free tRNA molecules, this enzyme counteracts the toxicity associated with the formation of D-aminoacyl-tRNA entities in vivo and helps enforce protein L-homochirality. The sequence is that of D-aminoacyl-tRNA deacylase from Deinococcus geothermalis (strain DSM 11300 / CIP 105573 / AG-3a).